The chain runs to 561 residues: Efflux pump bfoC (561 aa).

The interval 1-55 (MSDTARILGGPSASSSRDGGMELNSFTEVSQTNSRSHSTKEEEGQVDDQQRPARE) is disordered. A compositionally biased stretch (polar residues) spans 24-36 (NSFTEVSQTNSRS). Positions 38–55 (STKEEEGQVDDQQRPARE) are enriched in basic and acidic residues. The next 13 helical transmembrane spans lie at 59-79 (GVLG…CIFC), 103-123 (DVGW…LTFG), 128-148 (FFPI…GSFI), 164-184 (VAGL…SQCV), 194-214 (GFIM…GGAF), 222-242 (WCFY…LFTF), 257-277 (AVGL…CLLL), 293-313 (VVAL…LQLW), 335-355 (LYGF…PIWF), 378-398 (VVFA…GPFM), 425-445 (IGYQ…PIFV), 457-477 (TATA…VSVA), and 530-550 (VHTF…ATVI).

The protein belongs to the major facilitator superfamily. TCR/Tet family.

The protein resides in the cell membrane. Efflux pump; part of the gene cluster that mediates the biosynthesis of bifonsecin B, a dimeric gamma-naphthopyrone. This chain is Efflux pump bfoC, found in Aspergillus brasiliensis (strain CBS 101740 / IMI 381727 / IBT 21946).